Here is a 101-residue protein sequence, read N- to C-terminus: Protein RnfH (101 aa).

The protein belongs to the UPF0125 (RnfH) family.

This chain is Protein RnfH, found in Pseudomonas aeruginosa (strain UCBPP-PA14).